The following is a 66-amino-acid chain: Large ribosomal subunit protein bL31 (66 aa).

Zn(2+) contacts are provided by cysteine 16, cysteine 18, cysteine 36, and cysteine 39.

It belongs to the bacterial ribosomal protein bL31 family. Type A subfamily. As to quaternary structure, part of the 50S ribosomal subunit. Zn(2+) is required as a cofactor.

Functionally, binds the 23S rRNA. The polypeptide is Large ribosomal subunit protein bL31 (Clostridioides difficile (strain 630) (Peptoclostridium difficile)).